We begin with the raw amino-acid sequence, 104 residues long: Large ribosomal subunit protein uL24 (104 aa).

It belongs to the universal ribosomal protein uL24 family. Part of the 50S ribosomal subunit.

In terms of biological role, one of two assembly initiator proteins, it binds directly to the 5'-end of the 23S rRNA, where it nucleates assembly of the 50S subunit. Functionally, one of the proteins that surrounds the polypeptide exit tunnel on the outside of the subunit. The sequence is that of Large ribosomal subunit protein uL24 from Methylorubrum extorquens (strain PA1) (Methylobacterium extorquens).